A 74-amino-acid polypeptide reads, in one-letter code: UPF0291 protein EF_0064 (74 aa).

The disordered stretch occupies residues 53–74 (YDPTGEDVTPEKLKEEQQKYFD). Over residues 61-74 (TPEKLKEEQQKYFD) the composition is skewed to basic and acidic residues.

Belongs to the UPF0291 family.

The protein localises to the cytoplasm. The polypeptide is UPF0291 protein EF_0064 (Enterococcus faecalis (strain ATCC 700802 / V583)).